The primary structure comprises 488 residues: Bifunctional pantoate ligase/cytidylate kinase (488 aa).

1-8 serves as a coordination point for ATP; sequence MGALHRAH. Positions 1 to 251 are pantoate--beta-alanine ligase; it reads MGALHRAHGQ…CGETRLIDHT (251 aa). The active-site Proton donor is the H8. A (R)-pantoate-binding site is contributed by Q36. Q36 contributes to the beta-alanine binding site. 125–128 provides a ligand contact to ATP; sequence GEKD. (R)-pantoate is bound at residue Q131. ATP is bound by residues V154 and 162 to 165; that span reads CSSR. A cytidylate kinase region spans residues 252 to 488; it reads FLMSRQPIVA…PEEVWPTPGS (237 aa).

This sequence in the N-terminal section; belongs to the pantothenate synthetase family. It in the C-terminal section; belongs to the cytidylate kinase family. Type 1 subfamily.

It is found in the cytoplasm. It catalyses the reaction (R)-pantoate + beta-alanine + ATP = (R)-pantothenate + AMP + diphosphate + H(+). The catalysed reaction is CMP + ATP = CDP + ADP. The enzyme catalyses dCMP + ATP = dCDP + ADP. The protein operates within cofactor biosynthesis; (R)-pantothenate biosynthesis; (R)-pantothenate from (R)-pantoate and beta-alanine: step 1/1. Functionally, catalyzes the condensation of pantoate with beta-alanine in an ATP-dependent reaction via a pantoyl-adenylate intermediate. Catalyzes the transfer of a phosphate group from ATP to either CMP or dCMP to form CDP or dCDP and ADP, respectively. This is Bifunctional pantoate ligase/cytidylate kinase from Prochlorococcus marinus (strain MIT 9303).